The sequence spans 358 residues: DNA replication and repair protein RecF (358 aa).

Residue 30 to 37 (GNNGSGKT) participates in ATP binding.

This sequence belongs to the RecF family.

Its subcellular location is the cytoplasm. Functionally, the RecF protein is involved in DNA metabolism; it is required for DNA replication and normal SOS inducibility. RecF binds preferentially to single-stranded, linear DNA. It also seems to bind ATP. In Actinobacillus succinogenes (strain ATCC 55618 / DSM 22257 / CCUG 43843 / 130Z), this protein is DNA replication and repair protein RecF.